The chain runs to 586 residues: Glutathione hydrolase 5 proenzyme (586 aa).

At 1–8 (MARGYGAT) the chain is on the cytoplasmic side. Residues 9 to 29 (VSLVLLGLGLALAVIVLAVVL) traverse the membrane as a helical; Signal-anchor for type II membrane protein segment. Residues 30-586 (SRHQAPCGPQ…LRKSGEAAGY (557 aa)) lie on the Extracellular side of the membrane. The N-linked (GlcNAc...) asparagine glycan is linked to N98. R110 serves as a coordination point for L-glutamate. N204, N303, and N347 each carry an N-linked (GlcNAc...) asparagine glycan. The active-site Nucleophile is the T388. Residues T406, E427, and 469–470 (SS) each bind L-glutamate. 2 N-linked (GlcNAc...) asparagine glycosylation sites follow: N535 and N550.

Belongs to the gamma-glutamyltransferase family. Heterodimer composed of the light and heavy chains. The active site is located in the light chain. Post-translationally, cleaved by autocatalysis into a large and a small subunit. In terms of processing, glycosylated. As to expression, expressed in follicular dendritic cells in lymphoid follicles (at protein level).

The protein resides in the membrane. It catalyses the reaction glutathione + H2O = L-cysteinylglycine + L-glutamate. The catalysed reaction is an S-substituted glutathione + H2O = an S-substituted L-cysteinylglycine + L-glutamate. The enzyme catalyses leukotriene C4 + H2O = leukotriene D4 + L-glutamate. It carries out the reaction S-[(2E,6E,10E)-geranylgeranyl]-L-glutathione + H2O = S-[(2E,6E,10E)-geranylgeranyl]-L-cysteinylglycine + L-glutamate. It catalyses the reaction an N-terminal (5-L-glutamyl)-[peptide] + an alpha-amino acid = 5-L-glutamyl amino acid + an N-terminal L-alpha-aminoacyl-[peptide]. The protein operates within sulfur metabolism; glutathione metabolism. It participates in lipid metabolism; leukotriene D4 biosynthesis. Inhibited by serine-borate. In terms of biological role, cleaves the gamma-glutamyl bond of extracellular glutathione tripeptide (gamma-Glu-Cys-Gly) and certain glutathione conjugates. Hydrolyzes glutathione releasing L-Glu and Cys-Gly dipeptide which is further metabolized to maintain extracellular cysteine levels but also to provide cysteine necessary for intracellular glutathione synthesis. Among glutathione-S-conjugates metabolizes leukotriene C4 (LTC4) and S-geranylgeranyl-glutathione (GGG), but is inactive toward gamma-glutamyl leucine. Converts extracellular LTC4 to LTD4 during acute inflammatory response. Acts as a negative regulator of GGG bioactivity. GGT5 (via GGG catabolism) and ABCC1 (via extracellular transport) establish GGG gradients within lymphoid tissues to position P2RY8-positive lymphocytes at germinal centers in lymphoid follicles and restrict their chemotactic transmigration from blood vessels to bone marrow parenchyma. The transpeptidation reaction, i.e. the transfer of gamma-glutamyl moiety to an acceptor molecule to yield a new gamma-glutamyl compound requires high concentration of dipeptide acceptor and is considered nonphysiological. The polypeptide is Glutathione hydrolase 5 proenzyme (GGT5) (Homo sapiens (Human)).